Reading from the N-terminus, the 116-residue chain is Endoribonuclease EndoA (116 aa).

The protein belongs to the PemK/MazF family. In terms of assembly, homodimer. Forms a complex with antitoxin EndoAI in which the toxin activity is inhibited. One dimer binds a ssRNA substrate, forms a heterohexamer composed of alternating toxin and antitoxin homodimers which inhibits the endoribonuclease activity. Antitoxin prevents RNA binding to the endoribonuclease.

Functionally, toxic component of a type II toxin-antitoxin (TA) system. Specific for 5'-UACAU-3' sequences, cleaving after the first U. Yields cleavage products with 3' phosphate and 5' hydroxyl groups. Cannot digest substrate with a UUdUACAUAA cleavage site. Overexpression is toxic for cell growth (shown in E.coli), probably by inhibiting protein synthesis through the cleavage of single-stranded RNA. The toxicity is reversed by the antitoxin EndoAI. Toxin activity cannot be inhibited by MazE from E.coli. The EndoA-EndoAI complex does not seem to bind its own promoter. In Bacillus subtilis (strain 168), this protein is Endoribonuclease EndoA.